The sequence spans 78 residues: Translation initiation factor IF-1, chloroplastic (78 aa).

The 72-residue stretch at 1-72 (MEKQKLIDME…TKGRITYRLR (72 aa)) folds into the S1-like domain.

The protein belongs to the IF-1 family. As to quaternary structure, component of the 30S ribosomal translation pre-initiation complex which assembles on the 30S ribosome in the order IF-2 and IF-3, IF-1 and N-formylmethionyl-tRNA(fMet); mRNA recruitment can occur at any time during PIC assembly.

The protein localises to the plastid. The protein resides in the chloroplast. In terms of biological role, one of the essential components for the initiation of protein synthesis. Stabilizes the binding of IF-2 and IF-3 on the 30S subunit to which N-formylmethionyl-tRNA(fMet) subsequently binds. Helps modulate mRNA selection, yielding the 30S pre-initiation complex (PIC). Upon addition of the 50S ribosomal subunit IF-1, IF-2 and IF-3 are released leaving the mature 70S translation initiation complex. The polypeptide is Translation initiation factor IF-1, chloroplastic (Marchantia polymorpha (Common liverwort)).